The following is a 38-amino-acid chain: Bacteriocin BAC79 (38 aa).

Its activity is regulated as follows. The antimicrobial activity of BAC79 was completely lost after treatment with enzymes trypsin, pepsin, proteinase-K, and carboxypeptidase, while there was no loss of activity with either amylase or lipase. Has antibacterial activity against a wide spectrum of Gram-positive and Gram-negative bacteria, including L.monocytogenes which is inhibited through disruption of the cell membrane. The polypeptide is Bacteriocin BAC79 (Weissella confusa (Lactobacillus confusus)).